We begin with the raw amino-acid sequence, 103 residues long: Histone H4 (103 aa).

The segment covering 1-14 (MSGRGKGGKGLGKG) has biased composition (gly residues). The disordered stretch occupies residues 1–20 (MSGRGKGGKGLGKGGAKRHR). Serine 2 carries the N-acetylserine modification. Lysine 17 carries the post-translational modification N6-acetyllysine. A DNA-binding region spans residues 17 to 21 (KRHRK). Residue lysine 21 is modified to N6-methyllysine.

Belongs to the histone H4 family. In terms of assembly, the nucleosome is a histone octamer containing two molecules each of H2A, H2B, H3 and H4 assembled in one H3-H4 heterotetramer and two H2A-H2B heterodimers. The octamer wraps approximately 147 bp of DNA.

It localises to the nucleus. The protein localises to the chromosome. Functionally, core component of nucleosome. Nucleosomes wrap and compact DNA into chromatin, limiting DNA accessibility to the cellular machineries which require DNA as a template. Histones thereby play a central role in transcription regulation, DNA repair, DNA replication and chromosomal stability. DNA accessibility is regulated via a complex set of post-translational modifications of histones, also called histone code, and nucleosome remodeling. The polypeptide is Histone H4 (Pyrenomonas salina).